The following is a 742-amino-acid chain: Vesicle-fusing ATPase (742 aa).

ATP is bound by residues 499 to 504 and 539 to 546; these read NGMVDC and SGSGKTAL. T544 contacts Mg(2+).

Belongs to the AAA ATPase family. In terms of assembly, homohexamer. Binds to SNARE-SNAP complexes to form 20S particles. Mg(2+) serves as cofactor.

The protein resides in the cytoplasm. The catalysed reaction is ATP + H2O = ADP + phosphate + H(+). Functionally, required for vesicle-mediated transport. Catalyzes the fusion of transport vesicles within the Golgi cisternae. Is also required for transport from the endoplasmic reticulum to the Golgi stack. Seems to function as a fusion protein required for the delivery of cargo proteins to all compartments of the Golgi stack independent of vesicle origin. Required for maintaining the normal morphology of the Golgi apparatus. The chain is Vesicle-fusing ATPase from Arabidopsis thaliana (Mouse-ear cress).